Here is a 270-residue protein sequence, read N- to C-terminus: Alpha N-terminal protein methyltransferase 1 (270 aa).

S-adenosyl-L-methionine-binding positions include G114, R119, 137-139 (EQN), 165-166 (LQ), and Q180.

Belongs to the methyltransferase superfamily. NTM1 family.

The enzyme catalyses N-terminal L-alanyl-L-prolyl-L-lysyl-[protein] + 3 S-adenosyl-L-methionine = N-terminal N,N,N-trimethyl-L-alanyl-L-prolyl-L-lysyl-[protein] + 3 S-adenosyl-L-homocysteine + 3 H(+). The catalysed reaction is N-terminal L-seryl-L-prolyl-L-lysyl-[protein] + 3 S-adenosyl-L-methionine = N-terminal N,N,N-trimethyl-L-seryl-L-prolyl-L-lysyl-[protein] + 3 S-adenosyl-L-homocysteine + 3 H(+). It catalyses the reaction N-terminal L-prolyl-L-prolyl-L-lysyl-[protein] + 2 S-adenosyl-L-methionine = N-terminal N,N-dimethyl-L-prolyl-L-prolyl-L-lysyl-[protein] + 2 S-adenosyl-L-homocysteine + 2 H(+). Functionally, alpha-N-methyltransferase that methylates the N-terminus of target proteins containing the N-terminal motif [Ala/Pro/Ser]-Pro-Lys when the initiator Met is cleaved. Specifically catalyzes mono-, di- or tri-methylation of exposed alpha-amino group of Ala or Ser residue in the [Ala/Ser]-Pro-Lys motif and mono- or di-methylation of Pro in the Pro-Pro-Lys motif. The chain is Alpha N-terminal protein methyltransferase 1 from Dictyostelium discoideum (Social amoeba).